Here is a 410-residue protein sequence, read N- to C-terminus: Cathepsin D (410 aa).

A signal peptide spans 1-20 (MKTPGVLLLILGLLASSSFA). Positions 21-64 (IIRIPLRKFTSIRRTMTEVGGSVEDLILKGPITKYSMQSSPKTT) are cleaved as a propeptide — activation peptide. In terms of domain architecture, Peptidase A1 spans 79 to 405 (YYGDIGIGTP…DRDNNRVGFA (327 aa)). 2 cysteine pairs are disulfide-bonded: Cys91–Cys160 and Cys110–Cys117. Residue Asp97 is part of the active site. Asn134 carries N-linked (GlcNAc...) asparagine glycosylation. Asn261 carries an N-linked (GlcNAc...) (high mannose) asparagine glycan. Cys284 and Cys288 are joined by a disulfide. Residue Asp293 is part of the active site. An intrachain disulfide couples Cys327 to Cys364.

It belongs to the peptidase A1 family. As to quaternary structure, consists of a light chain and a heavy chain. Interacts with ADAM30; this leads to activation of CTSD. Interacts with GRN; stabilizes CTSD; increases its proteolytic activity. Post-translationally, N- and O-glycosylated. In terms of processing, undergoes proteolytic cleavage and activation by ADAM30.

The protein resides in the lysosome. The protein localises to the melanosome. It is found in the secreted. It localises to the extracellular space. The enzyme catalyses Specificity similar to, but narrower than, that of pepsin A. Does not cleave the 4-Gln-|-His-5 bond in B chain of insulin.. Functionally, acid protease active in intracellular protein breakdown. Plays a role in APP processing following cleavage and activation by ADAM30 which leads to APP degradation. This chain is Cathepsin D (Ctsd), found in Mus musculus (Mouse).